Consider the following 293-residue polypeptide: Phosphatidylserine decarboxylase proenzyme (293 aa).

Residues aspartate 88, histidine 144, and serine 247 each act as charge relay system; for autoendoproteolytic cleavage activity in the active site. Serine 247 functions as the Schiff-base intermediate with substrate; via pyruvic acid; for decarboxylase activity in the catalytic mechanism. Serine 247 carries the post-translational modification Pyruvic acid (Ser); by autocatalysis.

Belongs to the phosphatidylserine decarboxylase family. PSD-B subfamily. Prokaryotic type I sub-subfamily. As to quaternary structure, heterodimer of a large membrane-associated beta subunit and a small pyruvoyl-containing alpha subunit. Pyruvate is required as a cofactor. In terms of processing, is synthesized initially as an inactive proenzyme. Formation of the active enzyme involves a self-maturation process in which the active site pyruvoyl group is generated from an internal serine residue via an autocatalytic post-translational modification. Two non-identical subunits are generated from the proenzyme in this reaction, and the pyruvate is formed at the N-terminus of the alpha chain, which is derived from the carboxyl end of the proenzyme. The autoendoproteolytic cleavage occurs by a canonical serine protease mechanism, in which the side chain hydroxyl group of the serine supplies its oxygen atom to form the C-terminus of the beta chain, while the remainder of the serine residue undergoes an oxidative deamination to produce ammonia and the pyruvoyl prosthetic group on the alpha chain. During this reaction, the Ser that is part of the protease active site of the proenzyme becomes the pyruvoyl prosthetic group, which constitutes an essential element of the active site of the mature decarboxylase.

It localises to the cell membrane. It catalyses the reaction a 1,2-diacyl-sn-glycero-3-phospho-L-serine + H(+) = a 1,2-diacyl-sn-glycero-3-phosphoethanolamine + CO2. It participates in phospholipid metabolism; phosphatidylethanolamine biosynthesis; phosphatidylethanolamine from CDP-diacylglycerol: step 2/2. In terms of biological role, catalyzes the formation of phosphatidylethanolamine (PtdEtn) from phosphatidylserine (PtdSer). The chain is Phosphatidylserine decarboxylase proenzyme from Xylella fastidiosa (strain M12).